Consider the following 392-residue polypeptide: Tropomodulin (392 aa).

Disordered stretches follow at residues 1–30, 59–90, and 118–138; these read MSQA…QLPS, DLNN…GPYK, and QKRG…PENG. The segment covering 16–29 has biased composition (polar residues); the sequence is SAPSANSQQGTQLP. Composition is skewed to basic and acidic residues over residues 76–90 and 122–138; these read RCRD…GPYK and KVYD…PENG.

The protein belongs to the tropomodulin family. Binds to the N-terminus of actin.

Its subcellular location is the cytoplasm. It localises to the cytoskeleton. Functionally, acts as the pointed end capping protein which maintains the length and dynamics of the actin filament. Blocks the elongation and depolymerization of the actin filaments at the pointed end. This is Tropomodulin (unc-94) from Caenorhabditis elegans.